A 463-amino-acid chain; its full sequence is V-type ATP synthase beta chain (463 aa).

It belongs to the ATPase alpha/beta chains family.

Produces ATP from ADP in the presence of a proton gradient across the membrane. The V-type beta chain is a regulatory subunit. This is V-type ATP synthase beta chain from Halothermothrix orenii (strain H 168 / OCM 544 / DSM 9562).